We begin with the raw amino-acid sequence, 214 residues long: Ras-related protein Rab-17 (214 aa).

S29 is subject to Phosphoserine. GTP contacts are provided by G31, K32, T33, and T50. Positions 33, 50, and 73 each coordinate Mg(2+). A Switch 1 motif is present at residues 43-54 (DFSNVLPTVGCA). The Switch 2 signature appears at 75-91 (AGQEKYQSVCHLYFRGA). Residues G76, N132, K133, D135, and A163 each contribute to the GTP site. The tract at residues 183 to 204 (RAGDTGSSRPQEGEAVALNQEP) is disordered. 2 S-geranylgeranyl cysteine lipidation sites follow: C211 and C212.

This sequence belongs to the small GTPase superfamily. Rab family. Mg(2+) is required as a cofactor. Expressed in kidney, liver, and intestine mainly by epithelial cells. Expressed in hippocampus (at protein level).

The protein resides in the recycling endosome membrane. It localises to the melanosome. It is found in the cell projection. Its subcellular location is the dendrite. It catalyses the reaction GTP + H2O = GDP + phosphate + H(+). Its activity is regulated as follows. Regulated by guanine nucleotide exchange factors (GEFs) which promote the exchange of bound GDP for free GTP. Regulated by GTPase activating proteins (GAPs) which increase the GTP hydrolysis activity. Inhibited by GDP dissociation inhibitors (GDIs). The small GTPases Rab are key regulators of intracellular membrane trafficking, from the formation of transport vesicles to their fusion with membranes. Rabs cycle between an inactive GDP-bound form and an active GTP-bound form that is able to recruit to membranes different set of downstream effectors directly responsible for vesicle formation, movement, tethering and fusion. RAB17 is involved in transcytosis, the directed movement of endocytosed material through the cell and its exocytosis from the plasma membrane at the opposite side. Mainly observed in epithelial cells, transcytosis mediates, for instance, the transcellular transport of immunoglobulins from the basolateral surface to the apical surface. Most probably controls membrane trafficking through apical recycling endosomes in a post-endocytic step of transcytosis. Required for melanosome transport and release from melanocytes, it also regulates dendrite and dendritic spine development. May also play a role in cell migration. The sequence is that of Ras-related protein Rab-17 from Mus musculus (Mouse).